The sequence spans 87 residues: Sec-independent protein translocase protein TatA (87 aa).

The chain crosses the membrane as a helical span at residues 1-21; it reads MGGMSITHWIVVAVVVMIFFG. Residues 40-87 form a disordered region; the sequence is KKGMSEDDTTPPAAPPAPAPRLENQPLPPENTTQNVAQNVPNDIKNNQ. Residues 69 to 87 are compositionally biased toward polar residues; sequence ENTTQNVAQNVPNDIKNNQ.

It belongs to the TatA/E family. As to quaternary structure, the Tat system comprises two distinct complexes: a TatABC complex, containing multiple copies of TatA, TatB and TatC subunits, and a separate TatA complex, containing only TatA subunits. Substrates initially bind to the TatABC complex, which probably triggers association of the separate TatA complex to form the active translocon.

The protein localises to the cell inner membrane. Functionally, part of the twin-arginine translocation (Tat) system that transports large folded proteins containing a characteristic twin-arginine motif in their signal peptide across membranes. TatA could form the protein-conducting channel of the Tat system. This chain is Sec-independent protein translocase protein TatA, found in Zymomonas mobilis subsp. mobilis (strain ATCC 31821 / ZM4 / CP4).